Here is a 639-residue protein sequence, read N- to C-terminus: Muscarinic acetylcholine receptor M3 (639 aa).

The Extracellular segment spans residues 1 to 115 (MLTHYQLCFQ…DPLGGHAVWQ (115 aa)). 6 N-linked (GlcNAc...) asparagine glycosylation sites follow: Asn16, Asn44, Asn45, Asn54, Asn97, and Asn101. A helical membrane pass occupies residues 116–139 (VVLIAFLTGIIALVTIIGNILVIV). Residues 140-152 (SFKVNKQLKTVNN) are Cytoplasmic-facing. Residues 153-173 (YFLLSLACADLIIGVISMNLF) form a helical membrane-spanning segment. Residues 174 to 190 (TTYIIMGHWALGNLACD) lie on the Extracellular side of the membrane. A disulfide bond links Cys189 and Cys269. The chain crosses the membrane as a helical span at residues 191–212 (LWLSIDYVASNASVMNLLVISF). Over 213 to 232 (DRYFSITRPLTYRAKRTTKR) the chain is Cytoplasmic. The helical transmembrane segment at 233–255 (AGVMIGLAWIISFVLWAPAILFW) threads the bilayer. The Extracellular segment spans residues 256 to 277 (QYFVGKRTVPLDECFIQFLSEP). A helical membrane pass occupies residues 278–300 (IITFGTAIAAFYLPVTIMSILYW). At 301–542 (RIYKETEKRT…LIKEKKAAQT (242 aa)) the chain is on the cytoplasmic side. Disordered stretches follow at residues 370 to 404 (PNTD…DEED) and 431 to 471 (LPSS…GGSF). Positions 382–393 (SDSWNNNDAAAS) are enriched in low complexity. Residues 443–454 (ELQKSDTDSQEK) are compositionally biased toward basic and acidic residues. Residues 543 to 563 (LSAILFAFIITWTPYNIMVLV) traverse the membrane as a helical segment. Residues 564-576 (NTFCDCVPKTVWN) lie on the Extracellular side of the membrane. The chain crosses the membrane as a helical span at residues 577 to 596 (LGYWLCYINSTVNPVCYALC). Residues 597-639 (NKMFRNTFKMLLLCQCDKRKRRKQQYQQRQSVIFHKRIPREAS) lie on the Cytoplasmic side of the membrane.

It belongs to the G-protein coupled receptor 1 family. Muscarinic acetylcholine receptor subfamily. CHRM3 sub-subfamily. As to expression, brain, heart atria, and ventricle.

Its subcellular location is the cell membrane. It localises to the postsynaptic cell membrane. In terms of biological role, the muscarinic acetylcholine receptor mediates various cellular responses, including inhibition of adenylate cyclase, breakdown of phosphoinositides and modulation of potassium channels through the action of G proteins. Primary transducing effect is Pi turnover. The protein is Muscarinic acetylcholine receptor M3 (CHRM3) of Gallus gallus (Chicken).